The sequence spans 231 residues: Ribosyldihydronicotinamide dehydrogenase [quinone] (231 aa).

Residues histidine 12, phenylalanine 18–serine 21, and leucine 104–phenylalanine 107 contribute to the FAD site. Substrate is bound at residue phenylalanine 127–isoleucine 129. FAD contacts are provided by residues threonine 148–glycine 151 and tyrosine 156. Zn(2+) is bound by residues histidine 174 and histidine 178. Position 194 (aspartate 194) interacts with FAD. At serine 197 the chain carries Phosphoserine. Arginine 201 contributes to the FAD binding site. A Zn(2+)-binding site is contributed by cysteine 223.

This sequence belongs to the NAD(P)H dehydrogenase (quinone) family. Homodimer. Zn(2+) is required as a cofactor. FAD serves as cofactor.

The protein resides in the cytoplasm. It catalyses the reaction 1-(beta-D-ribofuranosyl)-1,4-dihydronicotinamide + a quinone + H(+) = beta-nicotinamide D-riboside + a quinol. Functionally, the enzyme apparently serves as a quinone reductase in connection with conjugation reactions of hydroquinones involved in detoxification pathways as well as in biosynthetic processes such as the vitamin K-dependent gamma-carboxylation of glutamate residues in prothrombin synthesis. The sequence is that of Ribosyldihydronicotinamide dehydrogenase [quinone] (Nqo2) from Mus musculus (Mouse).